Here is a 513-residue protein sequence, read N- to C-terminus: Histone acetyltransferase KAT5 (513 aa).

A Tudor-knot domain is found at 8–65 (IEGCRLPVLRRNQDNEDEWPLAEILSVKDISGRKLFYVHYIDFNKRLDEWVTHERLDL). An N6-acetyllysine modification is found at lysine 52. The disordered stretch occupies residues 69–106 (QFPKKEAKTPTKNGLPGSRPGSPEREVPASAQASGKTL). At serine 86 the chain carries Phosphoserine. Serine 90 carries the phosphoserine; by CDK1 and CDK9 modification. N6-acetyllysine; by autocatalysis occurs at positions 104 and 120. Residues 122 to 217 (REAIPGGEPD…SAPRMTGSLV (96 aa)) form a disordered region. Over residues 133–144 (PLSSSSCLQPNH) the composition is skewed to polar residues. An N6-acetyllysine; by autocatalysis mark is found at lysine 148, lysine 150, lysine 187, and lysine 189. Serine 199 is modified (phosphoserine). The region spanning 227 to 504 (TRMKNIECIE…IDSKCLHFTP (278 aa)) is the MYST-type HAT domain. The segment at 260–285 (LYLCEFCLKYGRSLKCLQRHLTKCDL) adopts a C2HC MYST-type zinc-finger fold. Residue lysine 327 is modified to N6-acetyllysine; by autocatalysis. An interaction with ATF2 region spans residues 368 to 513 (ACILTLPPYQ…PKDWSKRGKW (146 aa)). Residues 370–372 (ILT) and 377–383 (QRRGYGK) each bind acetyl-CoA. Catalysis depends on glutamate 403, which acts as the Proton donor/acceptor. Serine 407 and serine 416 together coordinate acetyl-CoA. Residue lysine 430 forms a Glycyl lysine isopeptide (Lys-Gly) (interchain with G-Cter in SUMO1); alternate linkage. Lysine 430 participates in a covalent cross-link: Glycyl lysine isopeptide (Lys-Gly) (interchain with G-Cter in SUMO2); alternate. A Glycyl lysine isopeptide (Lys-Gly) (interchain with G-Cter in SUMO1) cross-link involves residue lysine 451.

Belongs to the MYST (SAS/MOZ) family. In terms of assembly, component of the NuA4 histone acetyltransferase complex which contains the catalytic subunit KAT5/TIP60 and the subunits EP400, TRRAP/PAF400, BRD8/SMAP, EPC1, DMAP1/DNMAP1, RUVBL1/TIP49, RUVBL2, ING3, actin, ACTL6A/BAF53A, MORF4L1/MRG15, MORF4L2/MRGX, MRGBP, YEATS4/GAS41, VPS72/YL1 and MEAF6. KAT5/TIP60, EPC1, and ING3 together constitute a minimal HAT complex termed Piccolo NuA4. The NuA4 complex interacts with MYC. Interacts with ATM. Interacts with JADE1. Interacts with PLA2G4A/CPLA2, EDNRA and HDAC7. Interacts with the cytoplasmic tail of APP and APBB1/FE65. Interacts with TRIM24 and TRIM68. Forms a complex with SENP6 and UBE2I in response to UV irradiation. Identified in a complex with HINT1. Interacts with ATF2 and CUL3. Interacts with NR1D2 (via N-terminus). Component of a SWR1-like complex. Interacts with FOXP3. Interacts with ZBTB49. Interacts with SRF. Interacts with ATF3; promoting autoacetylation and deubiquitination by USP7. Interacts with EP300/p300; interaction promotes KAT5 autoacetylation. Interacts with PRKDC; interaction is impaired following KAT5 sumoylation. Interacts with GPR50. Interacts with NME3; this interaction enables recruitment of NME3 at DNA damage sites where it plays a role in the repair of DNA. In terms of processing, phosphorylated on Ser-86 and Ser-90; enhanced during G2/M phase. The phosphorylated form has a higher activity. Phosphorylation at Ser-90 by CDK1 or CDK9 is a prerequisite for phosphorylation at Ser-86 by GSK3. Phosphorylation at Ser-86 by GSK3 (GSK3A or GSK3B) activates acetyltransferase and acyltransferase activity. Phosphorylation at Ser-90 by CDK9 promotes KAT5 recruitment to chromatin. Phosphorylation by VRK1 following DNA damage promotes KAT5 association with chromatin and histone acetyltransferase activity. Autoacetylated. Autoacetylation is required for histone acetyltransferase activity. Autoacetylation at Lys-327 is facilitated by interaction with EP300/p300: it prevents ubiquitination and subsequent degradation by the proteasome and promotes acetylation of target proteins. Deacetylated by HDAC3 and SIRT1. Deacetylation by HDAC3 promotes its ubiquitination and cytoplasmic localization. Post-translationally, sumoylated by UBE2I at Lys-430 and Lys-451, leading to increase of its histone acetyltransferase activity in UV-induced DNA damage response, as well as its translocation to nuclear bodies. Sumoylation with SUMO2 by PIAS4 at Lys-430 promotes repair of DNA double-strand breaks (DSBs) via homologous recombination (HR). Sumoylation by PIAS4 impairs interaction with PRKDC, inhibiting non-homologous end joining (NHEJ)-mediated repair of DSBs, thereby facilitating HR. Desumoylated by SENP3. In terms of processing, ubiquitinated by MDM2, leading to its proteasome-dependent degradation. Ubiquitination is prevented by autoacetylation at Lys-327. Ubiquitinated following deacetylation by HDAC3, leading to cytoplasmic localization. Deubiquitinated by USP7 following interaction with ATF3, promoting its stabilization. In terms of tissue distribution, expressed in testis, heart, brain, kidney and liver. Weakly expressed in lung.

It is found in the nucleus. The protein resides in the chromosome. Its subcellular location is the cytoplasm. It localises to the centromere. The protein localises to the kinetochore. It is found in the cytoskeleton. The protein resides in the spindle pole. Its subcellular location is the nucleolus. It localises to the perinuclear region. The enzyme catalyses L-lysyl-[histone] + acetyl-CoA = N(6)-acetyl-L-lysyl-[histone] + CoA + H(+). It carries out the reaction L-lysyl-[protein] + acetyl-CoA = N(6)-acetyl-L-lysyl-[protein] + CoA + H(+). The catalysed reaction is (2E)-butenoyl-CoA + L-lysyl-[protein] = N(6)-(2E)-butenoyl-L-lysyl-[protein] + CoA + H(+). It catalyses the reaction 2-hydroxyisobutanoyl-CoA + L-lysyl-[protein] = N(6)-(2-hydroxyisobutanoyl)-L-lysyl-[protein] + CoA + H(+). The enzyme catalyses (S)-lactoyl-CoA + L-lysyl-[protein] = N(6)-[(S)-lactoyl]-L-lysyl-[protein] + CoA + H(+). With respect to regulation, acyltransferase and acetyltransferase activities are activated by phosphorylation and autoacetylation. Autoacetylation activates the histone acetyltransferase activity. Functionally, catalytic subunit of the NuA4 histone acetyltransferase complex, a multiprotein complex involved in transcriptional activation of select genes principally by acetylation of nucleosomal histones H2A and H4. Histone acetylation alters nucleosome-DNA interactions and promotes interaction of the modified histones with other proteins which positively regulate transcription. The NuA4 histone acetyltransferase complex is required for the activation of transcriptional programs associated with proto-oncogene mediated growth induction, tumor suppressor mediated growth arrest and replicative senescence, apoptosis, and DNA repair. The NuA4 complex plays a direct role in repair of DNA double-strand breaks (DSBs) by promoting homologous recombination (HR): the complex inhibits TP53BP1 binding to chromatin via MBTD1, which recognizes and binds histone H4 trimethylated at 'Lys-20' (H4K20me), and KAT5 that catalyzes acetylation of 'Lys-15' of histone H2A (H2AK15ac), thereby blocking the ubiquitination mark required for TP53BP1 localization at DNA breaks. Also involved in DSB repair by mediating acetylation of 'Lys-5' of histone H2AX (H2AXK5ac), promoting NBN/NBS1 assembly at the sites of DNA damage. The NuA4 complex plays a key role in hematopoietic stem cell maintenance and is required to maintain acetylated H2A.Z/H2AZ1 at MYC target genes. The NuA4 complex is also required for spermatid development by promoting acetylation of histones: histone hyperacetylation is required for histone replacement during the transition from round to elongating spermatids. Component of a SWR1-like complex that specifically mediates the removal of histone H2A.Z/H2AZ1 from the nucleosome. Also acetylates non-histone proteins, such as BMAL1, ATM, AURKB, CHKA, CGAS, ERCC4/XPF, LPIN1, TP53/p53, NDC80/HEC1, NR1D2, RAN, SOX4, FOXP3, SQSTM1, ULK1 and RUBCNL/Pacer. Directly acetylates and activates ATM. Promotes nucleotide excision repair (NER) by mediating acetylation of ERCC4/XPF, thereby promoting formation of the ERCC4-ERCC1 complex. Relieves NR1D2-mediated inhibition of APOC3 expression by acetylating NR1D2. Acts as a regulator of regulatory T-cells (Treg) by catalyzing FOXP3 acetylation, thereby promoting FOXP3 transcriptional repressor activity. Involved in skeletal myoblast differentiation by mediating acetylation of SOX4. Catalyzes acetylation of APBB1/FE65, increasing its transcription activator activity. Promotes transcription elongation during the activation phase of the circadian cycle by catalyzing acetylation of BMAL1, promoting elongation of circadian transcripts. Together with GSK3 (GSK3A or GSK3B), acts as a regulator of autophagy: phosphorylated at Ser-86 by GSK3 under starvation conditions, leading to activate acetyltransferase activity and promote acetylation of key autophagy regulators, such as ULK1 and RUBCNL/Pacer. Acts as a regulator of the cGAS-STING innate antiviral response by catalyzing acetylation the N-terminus of CGAS, thereby promoting CGAS DNA-binding and activation. Also regulates lipid metabolism by mediating acetylation of CHKA or LPIN1. Promotes lipolysis of lipid droplets following glucose deprivation by mediating acetylation of isoform 1 of CHKA, thereby promoting monomerization of CHKA and its conversion into a tyrosine-protein kinase. Acts as a regulator of fatty-acid-induced triacylglycerol synthesis by catalyzing acetylation of LPIN1, thereby promoting the synthesis of diacylglycerol. In addition to protein acetyltransferase, can use different acyl-CoA substrates, such as (2E)-butenoyl-CoA (crotonyl-CoA), S-lactoyl-CoA (lactyl-CoA) and 2-hydroxyisobutanoyl-CoA (2-hydroxyisobutyryl-CoA), and is able to mediate protein crotonylation, lactylation and 2-hydroxyisobutyrylation, respectively. Acts as a key regulator of chromosome segregation and kinetochore-microtubule attachment during mitosis by mediating acetylation or crotonylation of target proteins. Catalyzes acetylation of AURKB at kinetochores, increasing AURKB activity and promoting accurate chromosome segregation in mitosis. Acetylates RAN during mitosis, promoting microtubule assembly at mitotic chromosomes. Acetylates NDC80/HEC1 during mitosis, promoting robust kinetochore-microtubule attachment. Catalyzes crotonylation of MAPRE1/EB1, thereby ensuring accurate spindle positioning in mitosis. Catalyzes lactylation of NBN/NBS1 in response to DNA damage, thereby promoting DNA double-strand breaks (DSBs) via homologous recombination (HR). The sequence is that of Histone acetyltransferase KAT5 from Mus musculus (Mouse).